The chain runs to 235 residues: MAEKVNNFPPLPKFIPLKPCFYQDFEADIPPQHLSLTKRLYYLWMLNSVTLAVNLVGCLAWLIGGGGATNFGLAFLWLILFTPCSYVCWFRPIYKAFKTDSSFSFMAFFFTFMAQLVISIIQAVGIPGWGVCGWIATISFFGTNIGSAVVMLIPTVMFTVVAVFSFIALSMVHKFYRGSGGSFSKAQEEWTTGAWKNPHVQQAAQNAAMGAAQGAMNQPQTQYSATPNYTYSNEM.

Over 1-39 (MAEKVNNFPPLPKFIPLKPCFYQDFEADIPPQHLSLTKR) the chain is Cytoplasmic. A helical membrane pass occupies residues 40–60 (LYYLWMLNSVTLAVNLVGCLA). Over 61-67 (WLIGGGG) the chain is Extracellular. Residues 68 to 88 (ATNFGLAFLWLILFTPCSYVC) traverse the membrane as a helical segment. Topologically, residues 89–102 (WFRPIYKAFKTDSS) are cytoplasmic. Residues 103–125 (FSFMAFFFTFMAQLVISIIQAVG) traverse the membrane as a helical segment. At 126 to 148 (IPGWGVCGWIATISFFGTNIGSA) the chain is on the extracellular side. Residues 149–169 (VVMLIPTVMFTVVAVFSFIAL) traverse the membrane as a helical segment. The Cytoplasmic portion of the chain corresponds to 170–235 (SMVHKFYRGS…TPNYTYSNEM (66 aa)).

Belongs to the SCAMP family. SCAMP5 subfamily. Interacts (via C-terminal part) with SYT1 and SYT2; interaction with synaptotagmins making a link with the SNARE molecules. Interacts with SLC9A7. Brain-specific.

The protein resides in the cell membrane. Its subcellular location is the golgi apparatus membrane. It is found in the golgi apparatus. It localises to the trans-Golgi network membrane. The protein localises to the recycling endosome membrane. The protein resides in the cytoplasmic vesicle. Its subcellular location is the secretory vesicle. It is found in the synaptic vesicle membrane. Its function is as follows. Required for the calcium-dependent exocytosis of signal sequence-containing cytokines such as CCL5. Probably acts in cooperation with the SNARE machinery. This is Secretory carrier-associated membrane protein 5 (Scamp5) from Mus musculus (Mouse).